We begin with the raw amino-acid sequence, 430 residues long: Adenylosuccinate synthetase (430 aa).

GTP contacts are provided by residues 12-18 (GDEGKGK) and 40-42 (GHT). The active-site Proton acceptor is the aspartate 13. Residues aspartate 13 and glycine 40 each coordinate Mg(2+). IMP is bound by residues 13–16 (DEGK), 38–41 (NAGH), threonine 128, arginine 142, glutamine 223, threonine 238, and arginine 302. The active-site Proton donor is the histidine 41. Residue 298 to 304 (TTTGRPR) coordinates substrate. GTP contacts are provided by residues arginine 304, 330–332 (SID), and 412–414 (SVG).

Belongs to the adenylosuccinate synthetase family. In terms of assembly, homodimer. Mg(2+) serves as cofactor.

The protein resides in the cytoplasm. It carries out the reaction IMP + L-aspartate + GTP = N(6)-(1,2-dicarboxyethyl)-AMP + GDP + phosphate + 2 H(+). Its pathway is purine metabolism; AMP biosynthesis via de novo pathway; AMP from IMP: step 1/2. Its function is as follows. Plays an important role in the de novo pathway of purine nucleotide biosynthesis. Catalyzes the first committed step in the biosynthesis of AMP from IMP. This chain is Adenylosuccinate synthetase, found in Streptococcus equi subsp. equi (strain 4047).